The chain runs to 49 residues: Large ribosomal subunit protein bL33B (49 aa).

Belongs to the bacterial ribosomal protein bL33 family.

The polypeptide is Large ribosomal subunit protein bL33B (Bacillus cereus (strain ATCC 14579 / DSM 31 / CCUG 7414 / JCM 2152 / NBRC 15305 / NCIMB 9373 / NCTC 2599 / NRRL B-3711)).